A 193-amino-acid polypeptide reads, in one-letter code: GTP cyclohydrolase 1 (193 aa).

Residues Cys-83, His-86, and Cys-154 each contribute to the Zn(2+) site.

This sequence belongs to the GTP cyclohydrolase I family. In terms of assembly, homomer.

It catalyses the reaction GTP + H2O = 7,8-dihydroneopterin 3'-triphosphate + formate + H(+). It participates in cofactor biosynthesis; 7,8-dihydroneopterin triphosphate biosynthesis; 7,8-dihydroneopterin triphosphate from GTP: step 1/1. The protein is GTP cyclohydrolase 1 of Porphyromonas gingivalis (strain ATCC 33277 / DSM 20709 / CIP 103683 / JCM 12257 / NCTC 11834 / 2561).